Consider the following 260-residue polypeptide: NH(3)-dependent NAD(+) synthetase (260 aa).

Glycine 31–serine 38 contacts ATP. Aspartate 37 contributes to the Mg(2+) binding site. Deamido-NAD(+) is bound at residue arginine 112. Threonine 132 serves as a coordination point for ATP. Glutamate 137 serves as a coordination point for Mg(2+). Lysine 161 and serine 183 together coordinate ATP.

It belongs to the NAD synthetase family. Homodimer.

The catalysed reaction is deamido-NAD(+) + NH4(+) + ATP = AMP + diphosphate + NAD(+) + H(+). Its pathway is cofactor biosynthesis; NAD(+) biosynthesis; NAD(+) from deamido-NAD(+) (ammonia route): step 1/1. Catalyzes the ATP-dependent amidation of deamido-NAD to form NAD. Uses ammonia as a nitrogen source. The protein is NH(3)-dependent NAD(+) synthetase of Helicobacter pylori (strain P12).